A 194-amino-acid chain; its full sequence is dTTP/UTP pyrophosphatase (194 aa).

Catalysis depends on aspartate 73, which acts as the Proton acceptor.

This sequence belongs to the Maf family. YhdE subfamily. Requires a divalent metal cation as cofactor.

The protein resides in the cytoplasm. It carries out the reaction dTTP + H2O = dTMP + diphosphate + H(+). The catalysed reaction is UTP + H2O = UMP + diphosphate + H(+). Functionally, nucleoside triphosphate pyrophosphatase that hydrolyzes dTTP and UTP. May have a dual role in cell division arrest and in preventing the incorporation of modified nucleotides into cellular nucleic acids. The sequence is that of dTTP/UTP pyrophosphatase from Clostridium botulinum (strain ATCC 19397 / Type A).